A 67-amino-acid chain; its full sequence is Large ribosomal subunit protein bL35 (67 aa).

Belongs to the bacterial ribosomal protein bL35 family.

The protein is Large ribosomal subunit protein bL35 of Sphingopyxis alaskensis (strain DSM 13593 / LMG 18877 / RB2256) (Sphingomonas alaskensis).